Reading from the N-terminus, the 347-residue chain is Eukaryotic translation initiation factor 3 subunit I (347 aa).

WD repeat units follow at residues 8-47, 50-89, 91-135, 151-190, 193-232, and 290-329; these read GHER…RLGT, GHTG…VIHT, TAPV…VTKE, ENHK…FITS, LHTQ…QLKS, and GHFG…FDFK.

This sequence belongs to the eIF-3 subunit I family. As to quaternary structure, component of the eukaryotic translation initiation factor 3 (eIF-3) complex.

It is found in the cytoplasm. Component of the eukaryotic translation initiation factor 3 (eIF-3) complex, which is involved in protein synthesis of a specialized repertoire of mRNAs and, together with other initiation factors, stimulates binding of mRNA and methionyl-tRNAi to the 40S ribosome. The eIF-3 complex specifically targets and initiates translation of a subset of mRNAs involved in cell proliferation. This Vanderwaltozyma polyspora (strain ATCC 22028 / DSM 70294 / BCRC 21397 / CBS 2163 / NBRC 10782 / NRRL Y-8283 / UCD 57-17) (Kluyveromyces polysporus) protein is Eukaryotic translation initiation factor 3 subunit I.